The chain runs to 132 residues: Small ribosomal subunit protein uS8 (132 aa).

Belongs to the universal ribosomal protein uS8 family. As to quaternary structure, part of the 30S ribosomal subunit. Contacts proteins S5 and S12.

In terms of biological role, one of the primary rRNA binding proteins, it binds directly to 16S rRNA central domain where it helps coordinate assembly of the platform of the 30S subunit. The protein is Small ribosomal subunit protein uS8 of Flavobacterium johnsoniae (strain ATCC 17061 / DSM 2064 / JCM 8514 / BCRC 14874 / CCUG 350202 / NBRC 14942 / NCIMB 11054 / UW101) (Cytophaga johnsonae).